Consider the following 345-residue polypeptide: Dihydroorotate dehydrogenase (quinone) (345 aa).

FMN contacts are provided by residues 65–69 and Thr89; that span reads AGLDK. Substrate is bound at residue Lys69. 114-118 provides a ligand contact to substrate; sequence NRMGF. FMN is bound by residues Asn142 and Asn175. Asn175 contributes to the substrate binding site. The active-site Nucleophile is Ser178. Position 180 (Asn180) interacts with substrate. 2 residues coordinate FMN: Lys220 and Thr248. Residue 249–250 coordinates substrate; the sequence is NT. Residues Gly271, Gly300, and 321–322 contribute to the FMN site; that span reads YT.

This sequence belongs to the dihydroorotate dehydrogenase family. Type 2 subfamily. Monomer. FMN serves as cofactor.

It is found in the cell membrane. It catalyses the reaction (S)-dihydroorotate + a quinone = orotate + a quinol. It functions in the pathway pyrimidine metabolism; UMP biosynthesis via de novo pathway; orotate from (S)-dihydroorotate (quinone route): step 1/1. Functionally, catalyzes the conversion of dihydroorotate to orotate with quinone as electron acceptor. This is Dihydroorotate dehydrogenase (quinone) from Burkholderia ambifaria (strain ATCC BAA-244 / DSM 16087 / CCUG 44356 / LMG 19182 / AMMD) (Burkholderia cepacia (strain AMMD)).